We begin with the raw amino-acid sequence, 569 residues long: Glycylpeptide N-tetradecanoyltransferase (569 aa).

The span at 1-18 shows a compositional bias: basic and acidic residues; the sequence is MPPTEESKPVDPAQEKQA. Residues 1–82 are disordered; it reads MPPTEESKPV…STESSAEVGL (82 aa). Over residues 55 to 68 the composition is skewed to basic residues; that stretch reads TKKKNKKKSKKKNK. Residues 158–161, 291–293, and 299–303 contribute to the tetradecanoyl-CoA site; these read YKFW, LCI, and GKRLA. V569 functions as the Proton acceptor; via carboxylate in the catalytic mechanism.

It belongs to the NMT family. In terms of assembly, monomer.

Its subcellular location is the cytoplasm. It catalyses the reaction N-terminal glycyl-[protein] + tetradecanoyl-CoA = N-tetradecanoylglycyl-[protein] + CoA + H(+). Adds a myristoyl group to the N-terminal glycine residue of certain cellular proteins. This Neurospora crassa (strain ATCC 24698 / 74-OR23-1A / CBS 708.71 / DSM 1257 / FGSC 987) protein is Glycylpeptide N-tetradecanoyltransferase (gtt-1).